The sequence spans 432 residues: Serine hydroxymethyltransferase (432 aa).

(6S)-5,6,7,8-tetrahydrofolate-binding positions include leucine 127 and 131–133 (GHL). At lysine 236 the chain carries N6-(pyridoxal phosphate)lysine.

The protein belongs to the SHMT family. In terms of assembly, homodimer. The cofactor is pyridoxal 5'-phosphate.

The protein localises to the cytoplasm. It catalyses the reaction (6R)-5,10-methylene-5,6,7,8-tetrahydrofolate + glycine + H2O = (6S)-5,6,7,8-tetrahydrofolate + L-serine. The protein operates within one-carbon metabolism; tetrahydrofolate interconversion. Its pathway is amino-acid biosynthesis; glycine biosynthesis; glycine from L-serine: step 1/1. Catalyzes the reversible interconversion of serine and glycine with tetrahydrofolate (THF) serving as the one-carbon carrier. This reaction serves as the major source of one-carbon groups required for the biosynthesis of purines, thymidylate, methionine, and other important biomolecules. Also exhibits THF-independent aldolase activity toward beta-hydroxyamino acids, producing glycine and aldehydes, via a retro-aldol mechanism. The protein is Serine hydroxymethyltransferase of Rhizobium rhizogenes (strain K84 / ATCC BAA-868) (Agrobacterium radiobacter).